The sequence spans 275 residues: Formamidopyrimidine-DNA glycosylase (275 aa).

Residue P2 is the Schiff-base intermediate with DNA of the active site. Residue E3 is the Proton donor of the active site. Catalysis depends on K58, which acts as the Proton donor; for beta-elimination activity. Positions 91 and 110 each coordinate DNA. An FPG-type zinc finger spans residues 238-272 (QVYGQTGKSCPRCGQAIVKLKVGGRGTHICPKCQK). Catalysis depends on R262, which acts as the Proton donor; for delta-elimination activity.

The protein belongs to the FPG family. In terms of assembly, monomer. Zn(2+) is required as a cofactor.

The enzyme catalyses Hydrolysis of DNA containing ring-opened 7-methylguanine residues, releasing 2,6-diamino-4-hydroxy-5-(N-methyl)formamidopyrimidine.. It carries out the reaction 2'-deoxyribonucleotide-(2'-deoxyribose 5'-phosphate)-2'-deoxyribonucleotide-DNA = a 3'-end 2'-deoxyribonucleotide-(2,3-dehydro-2,3-deoxyribose 5'-phosphate)-DNA + a 5'-end 5'-phospho-2'-deoxyribonucleoside-DNA + H(+). Functionally, involved in base excision repair of DNA damaged by oxidation or by mutagenic agents. Acts as a DNA glycosylase that recognizes and removes damaged bases. Has a preference for oxidized purines, such as 7,8-dihydro-8-oxoguanine (8-oxoG). Has AP (apurinic/apyrimidinic) lyase activity and introduces nicks in the DNA strand. Cleaves the DNA backbone by beta-delta elimination to generate a single-strand break at the site of the removed base with both 3'- and 5'-phosphates. This chain is Formamidopyrimidine-DNA glycosylase, found in Streptococcus pyogenes serotype M3 (strain ATCC BAA-595 / MGAS315).